A 304-amino-acid polypeptide reads, in one-letter code: Probable 5-dehydro-4-deoxyglucarate dehydratase (304 aa).

The protein belongs to the DapA family.

The enzyme catalyses 5-dehydro-4-deoxy-D-glucarate + H(+) = 2,5-dioxopentanoate + CO2 + H2O. It participates in carbohydrate acid metabolism; D-glucarate degradation; 2,5-dioxopentanoate from D-glucarate: step 2/2. This is Probable 5-dehydro-4-deoxyglucarate dehydratase from Methylobacterium radiotolerans (strain ATCC 27329 / DSM 1819 / JCM 2831 / NBRC 15690 / NCIMB 10815 / 0-1).